The sequence spans 577 residues: E3 ubiquitin-protein ligase MSL2 (577 aa).

The tract at residues 1-116 is sufficient for interaction with MSL1; that stretch reads MNPVNATALY…CEYITQTTLA (116 aa). 8 residues coordinate Zn(2+): Cys-44, Cys-47, Cys-62, His-64, Cys-67, Cys-70, Cys-81, and Cys-84. The RING-type zinc-finger motif lies at 44-85; that stretch reads CCVCGHLLQDPIAPTNSTCQHYVCKTCKGKKMMMKPSCSWCK. Lys-375 participates in a covalent cross-link: Glycyl lysine isopeptide (Lys-Gly) (interchain with G-Cter in SUMO2). Residues 405 to 427 are disordered; the sequence is TKSMKKSHEHGSKKSHSKTKPGI. Residues 407–423 are compositionally biased toward basic residues; sequence SMKKSHEHGSKKSHSKT. Ser-447 carries the phosphoserine modification. The CXC MSL2-type domain occupies 457–508; it reads QEKKGCKCGRATQNPSVLTCRGQRCPCYSNRKACLDCICRGCQNSYMANGEK. Zn(2+)-binding residues include Cys-462, Cys-464, Cys-476, Cys-481, Cys-483, Cys-490, Cys-493, Cys-495, and Cys-498.

This sequence belongs to the MSL2 family. As to quaternary structure, component of a multisubunit histone acetyltransferase complex (MSL) at least composed of the KAT8/MOF/MYST1, MSL1/hampin, MSL2 and MSL3. Forms a MSL heterotetrameric core with MSL1.

Its subcellular location is the nucleus. The protein resides in the chromosome. It carries out the reaction S-ubiquitinyl-[E2 ubiquitin-conjugating enzyme]-L-cysteine + [acceptor protein]-L-lysine = [E2 ubiquitin-conjugating enzyme]-L-cysteine + N(6)-ubiquitinyl-[acceptor protein]-L-lysine.. The protein operates within protein modification; protein ubiquitination. Its function is as follows. Non-catalytic component of the MSL histone acetyltransferase complex, a multiprotein complex that mediates the majority of histone H4 acetylation at 'Lys-16' (H4K16ac), an epigenetic mark that prevents chromatin compaction. The MSL complex is required for chromosome stability and genome integrity by maintaining homeostatic levels of H4K16ac. The MSL complex is also involved in gene dosage by promoting up-regulation of genes expressed by the X chromosome. X up-regulation is required to compensate for autosomal biallelic expression. The MSL complex also participates in gene dosage compensation by promoting expression of Tsix non-coding RNA. MSL2 plays a key role in gene dosage by ensuring biallelic expression of a subset of dosage-sensitive genes, including many haploinsufficient genes. Acts by promoting promoter-enhancer contacts, thereby preventing DNA methylation of one allele and creating a methylation-free environment for methylation-sensitive transcription factors such as SP1, KANSL1 and KANSL3. Also acts as an E3 ubiquitin ligase that promotes monoubiquitination of histone H2B at 'Lys-35' (H2BK34Ub), but not that of H2A. This activity is greatly enhanced by heterodimerization with MSL1. H2B ubiquitination in turn stimulates histone H3 methylation at 'Lys-4' (H3K4me) and 'Lys-79' (H3K79me) and leads to gene activation, including that of HOXA9 and MEIS1. Also involved in the DNA damage response by mediating ubiquitination of TP53/p53 and TP53BP1. This Homo sapiens (Human) protein is E3 ubiquitin-protein ligase MSL2.